The sequence spans 237 residues: Phosphoadenosine 5'-phosphosulfate reductase (237 aa).

C231 serves as the catalytic Nucleophile; cysteine thiosulfonate intermediate.

Belongs to the PAPS reductase family. CysH subfamily.

It is found in the cytoplasm. The enzyme catalyses [thioredoxin]-disulfide + sulfite + adenosine 3',5'-bisphosphate + 2 H(+) = [thioredoxin]-dithiol + 3'-phosphoadenylyl sulfate. The protein operates within sulfur metabolism; hydrogen sulfide biosynthesis; sulfite from sulfate: step 3/3. In terms of biological role, catalyzes the formation of sulfite from phosphoadenosine 5'-phosphosulfate (PAPS) using thioredoxin as an electron donor. The chain is Phosphoadenosine 5'-phosphosulfate reductase from Xylella fastidiosa (strain 9a5c).